Here is a 507-residue protein sequence, read N- to C-terminus: Maturase K (507 aa).

The protein belongs to the intron maturase 2 family. MatK subfamily.

It is found in the plastid. It localises to the chloroplast. Functionally, usually encoded in the trnK tRNA gene intron. Probably assists in splicing its own and other chloroplast group II introns. In Lyonia lucida (Fetterbush), this protein is Maturase K.